The primary structure comprises 506 residues: (+)-piperitol/(+)-sesamin synthase CYP81Q2 (506 aa).

Residues 3 to 23 (AEMLYSALALTFAIFMVYRIL) form a helical membrane-spanning segment. Position 439 (cysteine 439) interacts with heme.

The protein belongs to the cytochrome P450 family. It depends on heme as a cofactor. In terms of tissue distribution, expressed in seeds.

It is found in the membrane. It carries out the reaction (+)-piperitol + reduced [NADPH--hemoprotein reductase] + O2 = (+)-sesamin + oxidized [NADPH--hemoprotein reductase] + 2 H2O + H(+). The enzyme catalyses (+)-pinoresinol + reduced [NADPH--hemoprotein reductase] + O2 = (+)-piperitol + oxidized [NADPH--hemoprotein reductase] + 2 H2O + H(+). Functionally, involved in the biosynthesis of (+)-sesamin, a furofuran class lignan. Functions in a dual catalytic mode. Catalyzes the synthesis of (+)-sesamin from (+)- pinoresinol by formation of two successive methylenedioxy bridges on (+)-pinoresinol and (+)-piperitol, respectively. The protein is (+)-piperitol/(+)-sesamin synthase CYP81Q2 of Sesamum radiatum (Black benniseed).